A 947-amino-acid polypeptide reads, in one-letter code: Bifunctional glutamine synthetase adenylyltransferase/adenylyl-removing enzyme (947 aa).

The segment at Met1–Glu440 is adenylyl removase. The segment at Ser450 to Val947 is adenylyl transferase.

It belongs to the GlnE family. Mg(2+) is required as a cofactor.

The catalysed reaction is [glutamine synthetase]-O(4)-(5'-adenylyl)-L-tyrosine + phosphate = [glutamine synthetase]-L-tyrosine + ADP. It carries out the reaction [glutamine synthetase]-L-tyrosine + ATP = [glutamine synthetase]-O(4)-(5'-adenylyl)-L-tyrosine + diphosphate. Involved in the regulation of glutamine synthetase GlnA, a key enzyme in the process to assimilate ammonia. When cellular nitrogen levels are high, the C-terminal adenylyl transferase (AT) inactivates GlnA by covalent transfer of an adenylyl group from ATP to specific tyrosine residue of GlnA, thus reducing its activity. Conversely, when nitrogen levels are low, the N-terminal adenylyl removase (AR) activates GlnA by removing the adenylyl group by phosphorolysis, increasing its activity. The regulatory region of GlnE binds the signal transduction protein PII (GlnB) which indicates the nitrogen status of the cell. The protein is Bifunctional glutamine synthetase adenylyltransferase/adenylyl-removing enzyme of Salmonella newport (strain SL254).